Consider the following 286-residue polypeptide: Aminoglycoside N(3)-acetyltransferase III (286 aa).

The protein belongs to the antibiotic N-acetyltransferase family.

It carries out the reaction a 2-deoxystreptamine antibiotic + acetyl-CoA = an N(3)-acetyl-2-deoxystreptamine antibiotic + CoA + H(+). Resistance to antibiotics containing the 2-deoxy-streptamine ring including gentamicin, kanamycin, tobramycin, neomycin and apramycin. In Salmonella sp, this protein is Aminoglycoside N(3)-acetyltransferase III (aacC3).